An 834-amino-acid polypeptide reads, in one-letter code: Periplasmic nitrate reductase (834 aa).

The tat-type signal signal peptide spans 1–32; sequence MTEPKIDRRQLLKLEAAAIAAAAAGMPTVARA. Residues 44–100 enclose the 4Fe-4S Mo/W bis-MGD-type domain; sequence LKWDKAACRFCGTGCSVMVATKDNRVVATHGDIKAEVNRGLNCVKGYFLSKIMYGHD. [4Fe-4S] cluster-binding residues include C51, C54, C58, and C86. Mo-bis(molybdopterin guanine dinucleotide) is bound by residues K88, Q155, N180, C184, 217–224, 248–252, 267–269, M378, Q382, N488, 514–515, K537, D564, and 724–733; these read WGSNMAEM, STFEH, QTD, SD, and TGRVVEHWHS. W800 is a binding site for substrate. Mo-bis(molybdopterin guanine dinucleotide)-binding residues include N808 and K825.

It belongs to the prokaryotic molybdopterin-containing oxidoreductase family. NasA/NapA/NarB subfamily. Component of the periplasmic nitrate reductase NapAB complex composed of NapA and NapB. The cofactor is [4Fe-4S] cluster. It depends on Mo-bis(molybdopterin guanine dinucleotide) as a cofactor. Predicted to be exported by the Tat system. The position of the signal peptide cleavage has not been experimentally proven.

Its subcellular location is the periplasm. It catalyses the reaction 2 Fe(II)-[cytochrome] + nitrate + 2 H(+) = 2 Fe(III)-[cytochrome] + nitrite + H2O. Functionally, catalytic subunit of the periplasmic nitrate reductase complex NapAB. Receives electrons from NapB and catalyzes the reduction of nitrate to nitrite. This is Periplasmic nitrate reductase from Bradyrhizobium sp. (strain ORS 278).